A 130-amino-acid polypeptide reads, in one-letter code: uncharacterized protein (130 aa).

The interval 1–34 is disordered; it reads MTAVGGSPPTRRCPATEDRAPATVATPSSTDPTA.

The protein to M.tuberculosis Rv1583c.

This is an uncharacterized protein from Mycobacterium tuberculosis (strain CDC 1551 / Oshkosh).